Consider the following 520-residue polypeptide: DnaJ homolog l(2)tid, mitochondrial (520 aa).

The N-terminal 62 residues, Met-1 to Leu-62, are a transit peptide targeting the mitochondrion. Arg-30 is modified (omega-N-methylarginine). A J domain is found at Asp-65–Gly-130. Residue Lys-106 is modified to N6-acetyllysine. Residues Gly-214 to Arg-292 form a CR-type zinc finger. Zn(2+)-binding residues include Cys-227, Cys-230, Cys-244, Cys-247, Cys-266, Cys-269, Cys-280, and Cys-283. A CXXCXGXG motif; approximate repeat occupies Cys-227–Lys-234. The stretch at Cys-244–Gly-251 is one CXXCXGXG motif repeat. One copy of the CXXCXGXG motif; approximate repeat lies at Cys-266 to Arg-273. Residues Cys-280–Gly-287 form a CXXCXGXG motif repeat. The tract at residues Gln-430 to Asn-520 is disordered. Over residues Ala-446–Ala-476 the composition is skewed to low complexity. Over residues Ser-479 to Glu-495 the composition is skewed to basic and acidic residues. A compositionally biased stretch (gly residues) spans Gly-496–Phe-511.

As to quaternary structure, interacts with ptc (via C-terminal cytoplasmic region); the interaction is probably direct. Interacts with hh/hedgehog; the interaction is probably mediated by the hedgehog receptor ptc. Appears to produce proteins of differing size. Predicted to have a molecular mass of 56 kDa (TID56) however proteins of 50 kDa, 47 kDa and 40 kDa have been identified and named TID50, TID47 and TID40. TID50 and TID40 localize to the mitochondria while TID47 localizes to the cytoplasm. TID50 is probably TID56 that has undergone mitochondrial transit peptide processing. TID40 and TID47 may be alternately processed proteins or may be isoforms resulting from alternative splicing. In terms of tissue distribution, ubiquitously expressed throughout embryonic development. In larvae, expression is seen in sensory organs, gopplet cells, gonads, imaginal disks, proventriculus, fat body, hematopoietic organ, midgut, Malpighian tubules and ring gland.

It is found in the cytoplasm. Its subcellular location is the cytosol. The protein resides in the mitochondrion. The protein localises to the mitochondrion outer membrane. Its function is as follows. Involved in hh/hedgehog signaling. May act as a tumor suppressor in larval imaginal disks. The chain is DnaJ homolog l(2)tid, mitochondrial from Drosophila melanogaster (Fruit fly).